The sequence spans 726 residues: Type VI secretion system spike protein VgrG1c (726 aa).

The segment at 502–522 (ANATQSGTKSRSSKGGTPANF) is disordered. Over residues 507-518 (SGTKSRSSKGGT) the composition is skewed to low complexity.

Belongs to the VgrG protein family. In terms of assembly, forms homomultimers. Part of the type VI secretion system (T6SS).

The protein localises to the secreted. Part of the H1 type VI secretion system (H1-T6SS) specialized secretion system, which delivers several virulence factors in both prokaryotic and eukaryotic cells during infection. Allows the delivery of the Tse5/RhsP1 toxin to target cells where it exerts its toxicity. The sequence is that of Type VI secretion system spike protein VgrG1c from Pseudomonas aeruginosa (strain ATCC 15692 / DSM 22644 / CIP 104116 / JCM 14847 / LMG 12228 / 1C / PRS 101 / PAO1).